The primary structure comprises 998 residues: Antigenic heat-stable 120 kDa protein (998 aa).

The interval 1–69 (GGFMSQDHTG…LSGTISTDDQ (69 aa)) is disordered. Over residues 12–21 (ENDEGYESDI) the composition is skewed to acidic residues. Residues 46-68 (TPASSTQSTPAISTLSGTISTDD) are compositionally biased toward polar residues.

It is found in the cytoplasm. This chain is Antigenic heat-stable 120 kDa protein (sca4), found in Rickettsia akari.